We begin with the raw amino-acid sequence, 354 residues long: Vanillate O-demethylase oxygenase subunit (354 aa).

The Rieske domain occupies 7–107 (WYVACTPDEI…VEERYGFIWV (101 aa)). 4 residues coordinate [2Fe-2S] cluster: Cys-47, His-49, Cys-66, and His-69.

It belongs to the bacterial ring-hydroxylating dioxygenase alpha subunit family. As to quaternary structure, this demethylase system consists of two proteins: an oxygenase and an oxygenase reductase. Requires [2Fe-2S] cluster as cofactor. It depends on Fe cation as a cofactor.

It catalyses the reaction vanillate + NADH + O2 + H(+) = 3,4-dihydroxybenzoate + formaldehyde + NAD(+) + H2O. It functions in the pathway xenobiotic degradation; vanillyl-alcohol degradation. This chain is Vanillate O-demethylase oxygenase subunit (vanA), found in Pseudomonas sp. (strain HR199 / DSM 7063).